The following is a 286-amino-acid chain: uncharacterized protein (286 aa).

This sequence belongs to the NmrA-type oxidoreductase family.

This is an uncharacterized protein from Bacillus subtilis (strain 168).